The primary structure comprises 97 residues: Integration host factor subunit alpha (97 aa).

It belongs to the bacterial histone-like protein family. As to quaternary structure, heterodimer of an alpha and a beta chain.

This protein is one of the two subunits of integration host factor, a specific DNA-binding protein that functions in genetic recombination as well as in transcriptional and translational control. In Hydrogenovibrio crunogenus (strain DSM 25203 / XCL-2) (Thiomicrospira crunogena), this protein is Integration host factor subunit alpha.